The following is an 836-amino-acid chain: Spliceosome associated factor 3, U4/U6 recycling protein (836 aa).

HAT repeat units follow at residues 127–163 (EDFK…YEMS), 296–329 (KLPQ…FERD), 331–367 (RPNE…LLRR), 418–451 (KNMD…LERQ), and 453–486 (GDKE…FERE). The disordered stretch occupies residues 507-585 (RAIRPQKKVS…APGSFAVQKA (79 aa)). Over residues 540–550 (IVKKVKGDDGG) the composition is skewed to basic and acidic residues. The span at 558-579 (SNAKSSSAVSSSNASSTPAPGS) shows a compositional bias: low complexity. 2 consecutive RRM domains span residues 593-668 (RTIF…ANDP) and 683-760 (SKVF…LSNP). Disordered regions lie at residues 757–786 (LSNP…PRKG) and 811–830 (AMDV…DQFR). Residues 816-827 (EGTSTSQPLSND) show a composition bias toward polar residues.

In terms of assembly, forms a complex composed of sart-3, terminal uridylyltransferase usip-1 and U6 snRNA; complex formation is mediated by usip-1 and sart-3 binding to U6 snRNA. Associates with U4 and U6 snRNP complexes, probably by interacting with U4 and U6 snRNAs. In terms of tissue distribution, ubiquitously expressed.

The protein localises to the nucleus. Its subcellular location is the nucleoplasm. In terms of biological role, U6 snRNP-binding protein that functions as a recycling factor of the splicing machinery. Promotes the initial reassembly of U4 and U6 snRNPs following their ejection from the spliceosome during its maturation. In Caenorhabditis elegans, this protein is Spliceosome associated factor 3, U4/U6 recycling protein.